A 337-amino-acid polypeptide reads, in one-letter code: Protein-arginine kinase (337 aa).

The Phosphagen kinase C-terminal domain maps to 12 to 240 (IVIASKVKIL…NKLILREKNQ (229 aa)). ATP-binding positions include 15–19 (ASKVK), 162–166 (RAKVF), and 193–198 (KSIYNS).

This sequence belongs to the ATP:guanido phosphotransferase family.

It carries out the reaction L-arginyl-[protein] + ATP = N(omega)-phospho-L-arginyl-[protein] + ADP + H(+). In terms of biological role, catalyzes the specific phosphorylation of arginine residues in proteins. This chain is Protein-arginine kinase, found in Clostridium perfringens (strain ATCC 13124 / DSM 756 / JCM 1290 / NCIMB 6125 / NCTC 8237 / Type A).